Reading from the N-terminus, the 485-residue chain is NADH-quinone oxidoreductase subunit N (485 aa).

14 helical membrane passes run 8 to 28, 35 to 55, 75 to 95, 105 to 125, 127 to 147, 159 to 179, 203 to 223, 235 to 255, 271 to 291, 297 to 317, 326 to 346, 374 to 394, 408 to 430, and 455 to 475; these read LIAL…MLSI, FLNA…LWFV, LYTG…YPWL, FYLL…ANHL, ALFL…GYAF, YTIL…LVYA, LLAG…LVPF, PAPV…GVVM, VVLG…ALSQ, LLGY…IALQ, VGVY…VVSL, AVMT…GFIG, WWLV…RVAV, and IVVL…QPLI.

Belongs to the complex I subunit 2 family. NDH-1 is composed of 13 different subunits. Subunits NuoA, H, J, K, L, M, N constitute the membrane sector of the complex.

Its subcellular location is the cell inner membrane. The catalysed reaction is a quinone + NADH + 5 H(+)(in) = a quinol + NAD(+) + 4 H(+)(out). In terms of biological role, NDH-1 shuttles electrons from NADH, via FMN and iron-sulfur (Fe-S) centers, to quinones in the respiratory chain. The immediate electron acceptor for the enzyme in this species is believed to be ubiquinone. Couples the redox reaction to proton translocation (for every two electrons transferred, four hydrogen ions are translocated across the cytoplasmic membrane), and thus conserves the redox energy in a proton gradient. The sequence is that of NADH-quinone oxidoreductase subunit N from Klebsiella pneumoniae (strain 342).